Reading from the N-terminus, the 187-residue chain is ATP synthase subunit b (187 aa).

Residues Leu4–Gly24 traverse the membrane as a helical segment.

It belongs to the ATPase B chain family. As to quaternary structure, F-type ATPases have 2 components, F(1) - the catalytic core - and F(0) - the membrane proton channel. F(1) has five subunits: alpha(3), beta(3), gamma(1), delta(1), epsilon(1). F(0) has three main subunits: a(1), b(2) and c(10-14). The alpha and beta chains form an alternating ring which encloses part of the gamma chain. F(1) is attached to F(0) by a central stalk formed by the gamma and epsilon chains, while a peripheral stalk is formed by the delta and b chains.

The protein resides in the cell inner membrane. F(1)F(0) ATP synthase produces ATP from ADP in the presence of a proton or sodium gradient. F-type ATPases consist of two structural domains, F(1) containing the extramembraneous catalytic core and F(0) containing the membrane proton channel, linked together by a central stalk and a peripheral stalk. During catalysis, ATP synthesis in the catalytic domain of F(1) is coupled via a rotary mechanism of the central stalk subunits to proton translocation. In terms of biological role, component of the F(0) channel, it forms part of the peripheral stalk, linking F(1) to F(0). The sequence is that of ATP synthase subunit b from Sulfurovum sp. (strain NBC37-1).